Here is a 273-residue protein sequence, read N- to C-terminus: Putative pyruvate, phosphate dikinase regulatory protein (273 aa).

151–158 provides a ligand contact to ADP; that stretch reads GVSRTSKT.

The protein belongs to the pyruvate, phosphate/water dikinase regulatory protein family. PDRP subfamily.

It carries out the reaction N(tele)-phospho-L-histidyl/L-threonyl-[pyruvate, phosphate dikinase] + ADP = N(tele)-phospho-L-histidyl/O-phospho-L-threonyl-[pyruvate, phosphate dikinase] + AMP + H(+). The enzyme catalyses N(tele)-phospho-L-histidyl/O-phospho-L-threonyl-[pyruvate, phosphate dikinase] + phosphate + H(+) = N(tele)-phospho-L-histidyl/L-threonyl-[pyruvate, phosphate dikinase] + diphosphate. Its function is as follows. Bifunctional serine/threonine kinase and phosphorylase involved in the regulation of the pyruvate, phosphate dikinase (PPDK) by catalyzing its phosphorylation/dephosphorylation. In Desulfitobacterium hafniense (strain Y51), this protein is Putative pyruvate, phosphate dikinase regulatory protein.